The sequence spans 120 residues: Aspartate 1-decarboxylase (120 aa).

Residue Ser-25 is the Schiff-base intermediate with substrate; via pyruvic acid of the active site. A Pyruvic acid (Ser) modification is found at Ser-25. Residue Thr-57 participates in substrate binding. Catalysis depends on Tyr-58, which acts as the Proton donor. 73–75 (GAA) contributes to the substrate binding site.

Belongs to the PanD family. In terms of assembly, heterooctamer of four alpha and four beta subunits. Pyruvate serves as cofactor. In terms of processing, is synthesized initially as an inactive proenzyme, which is activated by self-cleavage at a specific serine bond to produce a beta-subunit with a hydroxyl group at its C-terminus and an alpha-subunit with a pyruvoyl group at its N-terminus.

The protein localises to the cytoplasm. It carries out the reaction L-aspartate + H(+) = beta-alanine + CO2. The protein operates within cofactor biosynthesis; (R)-pantothenate biosynthesis; beta-alanine from L-aspartate: step 1/1. Functionally, catalyzes the pyruvoyl-dependent decarboxylation of aspartate to produce beta-alanine. The sequence is that of Aspartate 1-decarboxylase from Deinococcus radiodurans (strain ATCC 13939 / DSM 20539 / JCM 16871 / CCUG 27074 / LMG 4051 / NBRC 15346 / NCIMB 9279 / VKM B-1422 / R1).